The following is a 382-amino-acid chain: UDP-4-amino-4-deoxy-L-arabinose--oxoglutarate aminotransferase (382 aa).

Residue Lys-183 is modified to N6-(pyridoxal phosphate)lysine.

This sequence belongs to the DegT/DnrJ/EryC1 family. ArnB subfamily. In terms of assembly, homodimer. Pyridoxal 5'-phosphate is required as a cofactor.

It catalyses the reaction UDP-4-amino-4-deoxy-beta-L-arabinose + 2-oxoglutarate = UDP-beta-L-threo-pentopyranos-4-ulose + L-glutamate. It functions in the pathway nucleotide-sugar biosynthesis; UDP-4-deoxy-4-formamido-beta-L-arabinose biosynthesis; UDP-4-deoxy-4-formamido-beta-L-arabinose from UDP-alpha-D-glucuronate: step 2/3. The protein operates within bacterial outer membrane biogenesis; lipopolysaccharide biosynthesis. In terms of biological role, catalyzes the conversion of UDP-4-keto-arabinose (UDP-Ara4O) to UDP-4-amino-4-deoxy-L-arabinose (UDP-L-Ara4N). The modified arabinose is attached to lipid A and is required for resistance to polymyxin and cationic antimicrobial peptides. In Pseudomonas aeruginosa (strain LESB58), this protein is UDP-4-amino-4-deoxy-L-arabinose--oxoglutarate aminotransferase.